The sequence spans 1169 residues: ATP-dependent helicase/deoxyribonuclease subunit B (1169 aa).

One can recognise a UvrD-like helicase ATP-binding domain in the interval 1 to 285; it reads MEIQFLAGRS…TIFERNHRHL (285 aa). 8 to 15 contacts ATP; that stretch reads GRSGSGKT. Residues 280-586 form the UvrD-like helicase C-terminal domain; it reads RNHRHLYTPD…KFALIPPSLD (307 aa). The [4Fe-4S] cluster site is built by Cys-801, Cys-1121, Cys-1124, and Cys-1130.

Belongs to the helicase family. AddB/RexB type 1 subfamily. In terms of assembly, heterodimer of AddA and AddB. Mg(2+) is required as a cofactor. [4Fe-4S] cluster serves as cofactor.

In terms of biological role, the heterodimer acts as both an ATP-dependent DNA helicase and an ATP-dependent, dual-direction single-stranded exonuclease. Recognizes the chi site generating a DNA molecule suitable for the initiation of homologous recombination. The AddB subunit has 5' -&gt; 3' nuclease activity but not helicase activity. The protein is ATP-dependent helicase/deoxyribonuclease subunit B of Bacillus pumilus (strain SAFR-032).